Consider the following 194-residue polypeptide: Thymidylate kinase (194 aa).

7–14 (GVDGVGKS) contacts ATP.

The protein belongs to the thymidylate kinase family.

The catalysed reaction is dTMP + ATP = dTDP + ADP. Functionally, phosphorylation of dTMP to form dTDP in both de novo and salvage pathways of dTTP synthesis. The sequence is that of Thymidylate kinase from Campylobacter curvus (strain 525.92).